We begin with the raw amino-acid sequence, 151 residues long: Small ribosomal subunit protein uS15 (151 aa).

An N6-acetyllysine; alternate modification is found at lysine 27. Lysine 27 carries the post-translational modification N6-succinyllysine; alternate. Lysine 27 is covalently cross-linked (Glycyl lysine isopeptide (Lys-Gly) (interchain with G-Cter in ubiquitin)). Residue serine 30 is modified to Phosphoserine. An N6-succinyllysine modification is found at lysine 34. Tyrosine 38 is subject to Phosphotyrosine. A Glycyl lysine isopeptide (Lys-Gly) (interchain with G-Cter in SUMO2) cross-link involves residue lysine 43.

The protein belongs to the universal ribosomal protein uS15 family. As to quaternary structure, component of the small ribosomal subunit. Part of the small subunit (SSU) processome, composed of more than 70 proteins and the RNA chaperone small nucleolar RNA (snoRNA) U3. Post-translationally, ubiquitinated at Lys-27 by RNF14 and RNF25 in response to ribosome collisions (ribosome stalling).

Its subcellular location is the cytoplasm. The protein resides in the nucleus. The protein localises to the nucleolus. Its function is as follows. Component of the small ribosomal subunit. The ribosome is a large ribonucleoprotein complex responsible for the synthesis of proteins in the cell. Part of the small subunit (SSU) processome, first precursor of the small eukaryotic ribosomal subunit. During the assembly of the SSU processome in the nucleolus, many ribosome biogenesis factors, an RNA chaperone and ribosomal proteins associate with the nascent pre-rRNA and work in concert to generate RNA folding, modifications, rearrangements and cleavage as well as targeted degradation of pre-ribosomal RNA by the RNA exosome. The polypeptide is Small ribosomal subunit protein uS15 (RPS13) (Cricetulus griseus (Chinese hamster)).